The primary structure comprises 468 residues: Aspartate ammonia-lyase (468 aa).

Thr-99, Ser-138, Thr-139, Asn-140, and Thr-185 together coordinate L-aspartate. The SS loop stretch occupies residues 315-324 (GSSIMPGKVN). The Proton acceptor role is filled by Ser-316. Ser-317 and Lys-322 together coordinate L-aspartate.

Belongs to the class-II fumarase/aspartase family. Aspartase subfamily. As to quaternary structure, homotetramer.

The enzyme catalyses L-aspartate = fumarate + NH4(+). Functionally, catalyzes the reversible conversion of L-aspartate to fumarate and ammonia. This is Aspartate ammonia-lyase (aspA) from Helicobacter pylori (strain J99 / ATCC 700824) (Campylobacter pylori J99).